Reading from the N-terminus, the 210-residue chain is Protein GrpE (210 aa).

Positions 1-31 (MAKDPQTPTDEELARAERDAEPQPGDATDDE) are disordered. Residues 12–21 (ELARAERDAE) are compositionally biased toward basic and acidic residues.

This sequence belongs to the GrpE family. As to quaternary structure, homodimer.

The protein resides in the cytoplasm. Functionally, participates actively in the response to hyperosmotic and heat shock by preventing the aggregation of stress-denatured proteins, in association with DnaK and GrpE. It is the nucleotide exchange factor for DnaK and may function as a thermosensor. Unfolded proteins bind initially to DnaJ; upon interaction with the DnaJ-bound protein, DnaK hydrolyzes its bound ATP, resulting in the formation of a stable complex. GrpE releases ADP from DnaK; ATP binding to DnaK triggers the release of the substrate protein, thus completing the reaction cycle. Several rounds of ATP-dependent interactions between DnaJ, DnaK and GrpE are required for fully efficient folding. The polypeptide is Protein GrpE (Chromohalobacter salexigens (strain ATCC BAA-138 / DSM 3043 / CIP 106854 / NCIMB 13768 / 1H11)).